The primary structure comprises 161 residues: Arachidonate 5-lipoxygenase-activating protein (161 aa).

At 1–8 the chain is on the lumenal side; it reads MDQEAVGN. The chain crosses the membrane as a helical span at residues 9 to 30; it reads VVLLALVTLISVVQNAFFAHKV. The Cytoplasmic segment spans residues 31–52; it reads EHESKAHNGRSFQRTGTLAFER. The helical transmembrane segment at 53–77 threads the bilayer; sequence VYTANQNCVDAYPTFLVVLWTAGLL. Residues 78–80 lie on the Lumenal side of the membrane; sequence CSQ. A helical transmembrane segment spans residues 81 to 102; the sequence is VPAAFAGLMYLFVRQKYFVGYL. The Cytoplasmic portion of the chain corresponds to 103–107; sequence GERTQ. An intramembrane segment occupies 108-115; it reads STPGYIFG. The chain crosses the membrane as a helical span at residues 116-128; sequence KRIILFLFLMSFA. At 129–161 the chain is on the lumenal side; that stretch reads GILNHYLIFFFGSDFENYIRTVSTTISPLLLIP.

It belongs to the MAPEG family. In terms of assembly, homotrimer. Interacts with LTC4S and ALOX5.

The protein resides in the nucleus membrane. It is found in the endoplasmic reticulum membrane. Functionally, required for leukotriene biosynthesis by ALOX5 (5-lipoxygenase). Anchors ALOX5 to the membrane. Binds arachidonic acid, and could play an essential role in the transfer of arachidonic acid to ALOX5. Binds to MK-886, a compound that blocks the biosynthesis of leukotrienes. The protein is Arachidonate 5-lipoxygenase-activating protein (Alox5ap) of Mus musculus (Mouse).